A 151-amino-acid chain; its full sequence is Large ribosomal subunit protein bL9 (151 aa).

The protein belongs to the bacterial ribosomal protein bL9 family.

Functionally, binds to the 23S rRNA. The sequence is that of Large ribosomal subunit protein bL9 from Chlorobium phaeobacteroides (strain DSM 266 / SMG 266 / 2430).